The following is a 344-amino-acid chain: L-rhamnose-proton symporter (344 aa).

10 helical membrane passes run 4-24 (AITM…CFYA), 38-58 (WSVG…ALLL), 68-88 (FSLS…IGNI), 101-121 (MGIG…TPII), 137-157 (TLLG…AGQL), 175-195 (LVLA…MNAA), 214-234 (LPSY…FCFI), 259-279 (VLLS…YAWG), 290-310 (ISWM…GLVL), and 323-343 (VLSL…MGMA).

It belongs to the L-rhamnose transporter (TC 2.A.7.6) family.

It is found in the cell inner membrane. It catalyses the reaction L-rhamnopyranose(in) + H(+)(in) = L-rhamnopyranose(out) + H(+)(out). Functionally, uptake of L-rhamnose across the cytoplasmic membrane with the concomitant transport of protons into the cell (symport system). The sequence is that of L-rhamnose-proton symporter from Escherichia coli O17:K52:H18 (strain UMN026 / ExPEC).